A 375-amino-acid chain; its full sequence is Phosphate acyltransferase (375 aa).

The interval 354–375 is disordered; that stretch reads AQDDATSADADAPGDSETGSTN. Positions 356-368 are enriched in low complexity; that stretch reads DDATSADADAPGD.

This sequence belongs to the PlsX family. In terms of assembly, homodimer. Probably interacts with PlsY.

It localises to the cytoplasm. It catalyses the reaction a fatty acyl-[ACP] + phosphate = an acyl phosphate + holo-[ACP]. It participates in lipid metabolism; phospholipid metabolism. Functionally, catalyzes the reversible formation of acyl-phosphate (acyl-PO(4)) from acyl-[acyl-carrier-protein] (acyl-ACP). This enzyme utilizes acyl-ACP as fatty acyl donor, but not acyl-CoA. This Ruegeria sp. (strain TM1040) (Silicibacter sp.) protein is Phosphate acyltransferase.